The primary structure comprises 246 residues: Protein YIPF4 (246 aa).

The Cytoplasmic portion of the chain corresponds to 1 to 115; the sequence is MQPPGPPPAY…FNRQVVRDNP (115 aa). A helical transmembrane segment spans residues 116–136; sequence DFWGPLAVVLFFSMISLYGQF. The Lumenal portion of the chain corresponds to 137–140; it reads RVVS. A helical transmembrane segment spans residues 141–161; sequence WIITIWIFGSLTIFLLARVLG. The Cytoplasmic segment spans residues 162–168; it reads GEVAYGQ. Residues 169-189 traverse the membrane as a helical segment; the sequence is VLGVIGYSLLPLIVIAPILLV. The Lumenal portion of the chain corresponds to 190–197; that stretch reads VGSFEMVS. The helical transmembrane segment at 198–218 threads the bilayer; sequence TLIKLFGVFWAAYSAASLLVG. At 219 to 225 the chain is on the cytoplasmic side; it reads EEFKTKK. The helical transmembrane segment at 226–246 threads the bilayer; sequence PLLIYPIFLLYIYFLSLYTGV.

Belongs to the YIP1 family. As to quaternary structure, interacts with YIPF3 and YIPF5.

It is found in the golgi apparatus. It localises to the cis-Golgi network membrane. In terms of biological role, involved in the maintenance of the Golgi structure. The chain is Protein YIPF4 (Yipf4) from Mus musculus (Mouse).